We begin with the raw amino-acid sequence, 435 residues long: Protein lin-54 (435 aa).

A disordered region spans residues 73–136 (DEPIDTSSHR…PASLPRTVQP (64 aa)). Positions 102–120 (TPGSSQYTVRNLSNLSGSP) are enriched in polar residues. Residues 173–288 (QRKPCNCTKS…KCKGCQNTET (116 aa)) enclose the CRC domain. Residues 175-188 (KPCNCTKSQCLKLY) are DNA-binding. Residues cysteine 177, cysteine 179, cysteine 184, cysteine 189, cysteine 191, cysteine 198, cysteine 201, cysteine 203, and cysteine 206 each contribute to the Zn(2+) site. The linker stretch occupies residues 235–250 (IGIARGGITDIERLHQ). Zn(2+)-binding residues include cysteine 253, cysteine 255, cysteine 260, cysteine 265, cysteine 267, cysteine 274, cysteine 278, cysteine 280, and cysteine 283. The segment at 253–266 (CHCKKSGCLKNYCE) is DNA-binding. The interval 415–435 (LTQDLDAAPTDDIPGPSTSTS) is disordered.

It belongs to the lin-54 family. In terms of assembly, component of the DRM complex, at least composed of lin-9, lin-35, lin-37, lin-52, lin-53, lin-54- dpl-1 and efl-1.

Its subcellular location is the nucleus. It is found in the chromosome. Its function is as follows. Synthetic multivulva class B (synMuvB) protein. SynMuvB proteins are required to repress the induction of vulval development by Ras signaling and probably act by forming the multiprotein DRM complex that repress transcription. The protein is Protein lin-54 of Caenorhabditis elegans.